A 443-amino-acid chain; its full sequence is MSDMEDDFMCDDEEDYDLEYSEDSNSEPNVDLENQYYNSKALKEDDPKAALSSFQKVLELEGEKGEWGFKALKQMIKINFKLTNFPEMMNRYKQLLTYIRSAVTRNYSEKSINSILDYISTSKQMDLLQEFYETTLEALKDAKNDRLWFKTNTKLGKLYLEREEFGKLQKILRQLHQSCQTDDGEDDLKKGTQLLEIYALEIQMYTAQKNNKKLKALYEQSLHIKSAIPHPLIMGVIRECGGKMHLREGEFEKAHTDFFEAFKNYDESGSPRRTTCLKYLVLANMLMKSGINPFDSQEAKPYKNDPEILAMTNLVSAYQNNDITEFEKILKTNHSNIMDDPFIREHIEELLRNIRTQVLIKLIKPYTRIHIPFISKELNIDVADVESLLVQCILDNTINGRIDQVNQLLELDHQKRGGARYTALDKWTNQLNSLNQAIVSKLA.

The PCI domain occupies Ala254–Arg416.

This sequence belongs to the CSN2 family. Component of the CSN complex, probably composed of cops1, cops2, cops3, cops4, cops5, cops6, cops7, cops8 and cops9.

The protein localises to the cytoplasm. Its subcellular location is the nucleus. Its function is as follows. Essential component of the COP9 signalosome complex (CSN), a complex involved in various cellular and developmental processes. The CSN complex is an essential regulator of the ubiquitin (Ubl) conjugation pathway by mediating the deneddylation of the cullin subunits of E3 ligase complexes, leading to modify the Ubl ligase activity. The chain is COP9 signalosome complex subunit 2 (cops2) from Danio rerio (Zebrafish).